The sequence spans 206 residues: Charged multivesicular body protein 6 (206 aa).

Residue Gly-2 is the site of N-myristoyl glycine attachment. Residues 11-103 adopt a coiled-coil conformation; the sequence is TRVTEQDRAV…AQIEMKVIEG (93 aa). The disordered stretch occupies residues 167-206; that stretch reads EADLELPEVPGEELPEVPEQEPVREKERVKKKPEREMVAV. Residues 168 to 185 show a composition bias toward acidic residues; that stretch reads ADLELPEVPGEELPEVPE. The short motif at 170–181 is the Type-2 MIT-interacting motif element; it reads LELPEVPGEELP. The span at 187 to 206 shows a compositional bias: basic and acidic residues; that stretch reads EPVREKERVKKKPEREMVAV.

Belongs to the SNF7 family. Probable core component of the endosomal sorting required for transport complex III (ESCRT-III). ESCRT-III components are thought to multimerize to form a flat lattice on the perimeter membrane of the endosome.

Its subcellular location is the endomembrane system. The protein resides in the late endosome membrane. Its function is as follows. Probable core component of the endosomal sorting required for transport complex III (ESCRT-III) which is involved in multivesicular bodies (MVBs) formation and sorting of endosomal cargo proteins into MVBs. MVBs contain intraluminal vesicles (ILVs) that are generated by invagination and scission from the limiting membrane of the endosome and mostly are delivered to lysosomes enabling degradation of membrane proteins, such as stimulated growth factor receptors, lysosomal enzymes and lipids. In the ESCRT-III complex, it probably serves as an acceptor for the ESCRT-II complex on endosomal membranes. The sequence is that of Charged multivesicular body protein 6 (chmp6) from Danio rerio (Zebrafish).